A 715-amino-acid polypeptide reads, in one-letter code: Patatin-like phospholipase domain-containing protein ATEG_02594 (715 aa).

The chain crosses the membrane as a helical span at residues 84-104; it reads WPFLAFVLGWISFLGVAYILT. The PNPLA domain occupies 274–465; that stretch reads LCLSGGATFA…RTDIPIKALN (192 aa). The GXSXG signature appears at 305 to 309; the sequence is GTSGG. The Nucleophile role is filled by S307. D452 acts as the Proton acceptor in catalysis. A disordered region spans residues 613-715; it reads TAPRGGGRAT…DVDSDTWKGQ (103 aa). Positions 652-661 are enriched in basic and acidic residues; it reads RTGEYSKEAD. Residues 665–678 show a composition bias toward polar residues; it reads AEMSDSSGVDSATA.

It belongs to the PLPL family.

Its subcellular location is the membrane. In terms of biological role, probable lipid hydrolase. The sequence is that of Patatin-like phospholipase domain-containing protein ATEG_02594 from Aspergillus terreus (strain NIH 2624 / FGSC A1156).